Reading from the N-terminus, the 739-residue chain is TonB-dependent heme receptor A (739 aa).

The signal sequence occupies residues 1-22 (MKMKKQCATLTFFIGLHGYTIA). Positions 38–150 (GHHERQPDRS…FAGTIKLETK (113 aa)) constitute a TBDR plug domain. In terms of domain architecture, TBDR beta-barrel spans 161 to 739 (LLGGLLKYGY…NIKLSISKQF (579 aa)).

The protein belongs to the TonB-dependent receptor family.

The protein resides in the cell outer membrane. Heme receptor. The polypeptide is TonB-dependent heme receptor A (tdhA) (Haemophilus ducreyi (strain 35000HP / ATCC 700724)).